We begin with the raw amino-acid sequence, 377 residues long: Guanine nucleotide-binding protein subunit beta-2 (377 aa).

7 WD repeats span residues 63 to 93 (GHTGKVYSLDWTPEKNRIVSASQDGRLIVWN), 105 to 135 (LPCAWVMTCAFSPSGQSVACGGLDSVCSIFN), 154 to 185 (GHKGYVSSCQYVPDEDTHVITSSGDQTCVLWD), 202 to 233 (GHTADVQSVSISSSNPRLFVSGSCDSTARLWD), 246 to 276 (GHEGDVNTVKFFPDGNRFGTGSDDGTCRLFD), 293 to 323 (GDIPHVTSMAFSISGRLLFVGYSNGDCYVWD), and 339 to 369 (SHEGRISCLGLSADGSALCTGSWDTNLKIWA).

Belongs to the WD repeat G protein beta family. In terms of assembly, g proteins are composed of 3 units, alpha, beta and gamma.

In terms of biological role, guanine nucleotide-binding proteins (G proteins) are involved as a modulator or transducer in various transmembrane signaling systems. The beta and gamma chains are required for the GTPase activity, for replacement of GDP by GTP, and for G protein-effector interaction. The polypeptide is Guanine nucleotide-binding protein subunit beta-2 (Nicotiana tabacum (Common tobacco)).